The primary structure comprises 705 residues: Kinesin-like protein KIF2A (705 aa).

The disordered stretch occupies residues 65 to 185 (DLVPDEDIEP…QQELREKRAQ (121 aa)). At Ser-75 the chain carries Phosphoserine. A Phosphothreonine modification is found at Thr-96. Ser-99 bears the Phosphoserine mark. Position 101 is an N6-acetyllysine (Lys-101). The segment covering 122–139 (LPEQSSSAQQNGSVSDIS) has biased composition (polar residues). Phosphoserine occurs at positions 134 and 139. A coiled-coil region spans residues 153–186 (RRKSNCVKEVEKLQEKREKRRLQQQELREKRAQD). The segment covering 158-185 (CVKEVEKLQEKREKRRLQQQELREKRAQ) has biased composition (basic and acidic residues). The Kinesin motor domain maps to 222 to 552 (RICVCVRKRP…LRYANRVKEL (331 aa)). Residue 312–319 (GQTGSGKT) participates in ATP binding. Gln-572 bears the Phosphoserine mark. Residues 659-698 (ATQLEAILEQKIDILTELRDKVKSFRAALQEEEQASKQIN) are a coiled coil.

This sequence belongs to the TRAFAC class myosin-kinesin ATPase superfamily. Kinesin family. MCAK/KIF2 subfamily. As to quaternary structure, interacts with AURKA and PLK1. Interacts with PSRC1. Interacts with MCRS1; the interaction enhances recruitment of KIF2A to the minus ends of spindle microtubules which promotes chromosome alignment.

It localises to the cytoplasm. It is found in the cytoskeleton. The protein resides in the microtubule organizing center. The protein localises to the centrosome. Its subcellular location is the spindle pole. It localises to the spindle. In terms of biological role, plus end-directed microtubule-dependent motor required for normal brain development. May regulate microtubule dynamics during axonal growth. Required for normal progression through mitosis. Required for normal congress of chromosomes at the metaphase plate. Required for normal spindle dynamics during mitosis. Promotes spindle turnover. Implicated in formation of bipolar mitotic spindles. Has microtubule depolymerization activity. In Rattus norvegicus (Rat), this protein is Kinesin-like protein KIF2A.